Consider the following 150-residue polypeptide: Macrodomain Ter protein (150 aa).

The protein belongs to the MatP family. Homodimer.

The protein localises to the cytoplasm. In terms of biological role, required for spatial organization of the terminus region of the chromosome (Ter macrodomain) during the cell cycle. Prevents early segregation of duplicated Ter macrodomains during cell division. Binds specifically to matS, which is a 13 bp signature motif repeated within the Ter macrodomain. This is Macrodomain Ter protein from Salmonella typhi.